The chain runs to 290 residues: Small ribosomal subunit biogenesis GTPase RsgA (290 aa).

The 152-residue stretch at 62–213 (KNSLVRPPIV…IADTPGFSSL (152 aa)) folds into the CP-type G domain. GTP-binding positions include 111–114 (SKLD) and 156–164 (GQTGVGKST). Residues cysteine 237, cysteine 242, histidine 244, and cysteine 250 each contribute to the Zn(2+) site.

It belongs to the TRAFAC class YlqF/YawG GTPase family. RsgA subfamily. As to quaternary structure, monomer. Associates with 30S ribosomal subunit, binds 16S rRNA. Zn(2+) serves as cofactor.

Its subcellular location is the cytoplasm. One of several proteins that assist in the late maturation steps of the functional core of the 30S ribosomal subunit. Helps release RbfA from mature subunits. May play a role in the assembly of ribosomal proteins into the subunit. Circularly permuted GTPase that catalyzes slow GTP hydrolysis, GTPase activity is stimulated by the 30S ribosomal subunit. The sequence is that of Small ribosomal subunit biogenesis GTPase RsgA from Streptococcus agalactiae serotype V (strain ATCC BAA-611 / 2603 V/R).